A 3027-amino-acid polypeptide reads, in one-letter code: DmX-like protein 1 (3027 aa).

3 WD repeats span residues 108–145 (FLES…KPTE), 166–206 (KTAS…RTAV), and 229–277 (AHPR…NDCL). Ser324, Ser422, Ser425, and Ser436 each carry phosphoserine. Over residues 420–433 (PSSEASVEDSNQAD) the composition is skewed to polar residues. Positions 420 to 450 (PSSEASVEDSNQADVKSDEETDDGVDDLKIN) are disordered. The stretch at 476-516 (DHQIEVLLSEWSKNADMLFSIHPMDGSLLVWHVDWLDEYQP) is one WD 4 repeat. Residues 563–584 (KQKPSGLTRSTSMLISSGHNKS) form a disordered region. Ser574 is modified (phosphoserine). 3 WD repeats span residues 580–621 (GHNK…ESAF), 628–665 (SHKS…RTPD), and 848–895 (GKDS…IPVS). Phosphoserine occurs at positions 918 and 924. WD repeat units follow at residues 968-1010 (PSAG…GESA), 1134-1175 (SNTK…VQDQ), and 1211-1251 (GSPP…EPVI). 4 positions are modified to phosphoserine: Ser1830, Ser1896, Ser1908, and Ser1970. 2 disordered regions span residues 2367–2412 (PSKE…SSAP) and 2446–2468 (SRAE…DDDD). Over residues 2451 to 2468 (DSEESLGSDDDDNDDDDD) the composition is skewed to acidic residues. WD repeat units lie at residues 2742–2783 (KAIN…TCFR), 2785–2824 (GGNS…CPVT), 2836–2878 (CHNK…ANSL), 2884–2923 (CHDS…QRQL), 2926–2965 (SHDS…LLHT), and 2978–3016 (NIGT…SPLN).

Expressed in bone, breast, eye, foreskin, heart, parathyroid, small intestine, testis, tonsils, placenta and uterus.

The polypeptide is DmX-like protein 1 (DMXL1) (Homo sapiens (Human)).